The sequence spans 462 residues: cAMP-dependent protein kinase regulatory subunit (462 aa).

A dimerization and phosphorylation region spans residues 54-203 (TPSPRFPPSP…RLKYAIEGNF (150 aa)). Residues 79–157 (FGANANPFGG…PTTDSYPAQY (79 aa)) are disordered. The span at 80-102 (GANANPFGGSSSNPNPFGGSASP) shows a compositional bias: low complexity. At Ser164 the chain carries Phosphoserine. Residues 204 to 333 (LFSH…FLEE), Glu282, Arg291, 336 to 453 (ILSS…KTGV), Glu401, and Arg410 contribute to the 3',5'-cyclic AMP site.

This sequence belongs to the cAMP-dependent kinase regulatory chain family. As to quaternary structure, tetramer, composed of 2 regulatory (R) and 2 catalytic (C) subunits. In the presence of cAMP it dissociates into 2 active monomeric C subunits and an R dimer.

This is cAMP-dependent protein kinase regulatory subunit (pkar1) from Hypocrea atroviridis (Trichoderma atroviride).